The chain runs to 139 residues: Protein archease (139 aa).

Ca(2+)-binding residues include D12, D138, and I139.

It belongs to the archease family.

In terms of biological role, activates the tRNA-splicing ligase complex by facilitating the enzymatic turnover of catalytic subunit RtcB. Acts by promoting the guanylylation of RtcB, a key intermediate step in tRNA ligation. Can also alter the NTP specificity of RtcB such that ATP, dGTP or ITP is used efficiently. This Saccharolobus islandicus (strain Y.N.15.51 / Yellowstone #2) (Sulfolobus islandicus) protein is Protein archease.